Reading from the N-terminus, the 640-residue chain is Scarecrow-like protein 27 (640 aa).

Low complexity-rich tracts occupy residues 68 to 79 and 86 to 98; these read SYSSTTTTLSSS and TVTN…GDDN. Residues 68–98 form a disordered region; it reads SYSSTTTTLSSSHGGGGTTVTNTTVTAGDDN. The GRAS domain maps to 259-639; that stretch reads GMAGDDQSVI…KELVTVSAWK (381 aa). The leucine repeat I (LRI) stretch occupies residues 266–331; that stretch reads SVIIEQLFNA…AEALLSLIHN (66 aa). The tract at residues 350–422 is VHIID; sequence YRSFSETSPF…NRASSLKLTV (73 aa). A VHIID motif is present at residues 383 to 387; it reads IHIID. Residues 438–470 are leucine repeat II (LRII); the sequence is FTEENLKTFAGEVKIPFEIELLSVELLLNPAYW. The tract at residues 480–565 is PFYRE; sequence EAIAVNLPVN…RFWVQPSIEK (86 aa). Residues 568–639 form an SAW region; that stretch reads MKRHRWIERS…KELVTVSAWK (72 aa).

This sequence belongs to the GRAS family. Expressed in seedlings, roots, cotyledons, leaves and flowers.

It is found in the nucleus. Probable transcription factor involved in plant development. This is Scarecrow-like protein 27 (SCL27) from Arabidopsis thaliana (Mouse-ear cress).